The sequence spans 77 residues: U8-lycotoxin-Ls1i (77 aa).

Positions 1–20 are cleaved as a signal peptide; the sequence is MKLIIFTGLVLFAIVSLIEV. The propeptide occupies 21-26; the sequence is QADNER.

It belongs to the neurotoxin 19 (CSTX) family. 08 (U8-Lctx) subfamily. Post-translationally, contains 4 disulfide bonds. Expressed by the venom gland.

It localises to the secreted. The sequence is that of U8-lycotoxin-Ls1i from Lycosa singoriensis (Wolf spider).